The sequence spans 424 residues: L-rhamnose isomerase (424 aa).

Mn(2+) contacts are provided by His261, Asp293, and Asp295.

It belongs to the rhamnose isomerase family. Mn(2+) serves as cofactor.

It is found in the cytoplasm. It catalyses the reaction L-rhamnopyranose = L-rhamnulose. Its pathway is carbohydrate degradation; L-rhamnose degradation; glycerone phosphate from L-rhamnose: step 1/3. Its function is as follows. Catalyzes the interconversion of L-rhamnose and L-rhamnulose. This Bacillus subtilis (strain 168) protein is L-rhamnose isomerase.